Reading from the N-terminus, the 117-residue chain is Large ribosomal subunit protein bL20 (117 aa).

Belongs to the bacterial ribosomal protein bL20 family.

Its function is as follows. Binds directly to 23S ribosomal RNA and is necessary for the in vitro assembly process of the 50S ribosomal subunit. It is not involved in the protein synthesizing functions of that subunit. The polypeptide is Large ribosomal subunit protein bL20 (Campylobacter hominis (strain ATCC BAA-381 / DSM 21671 / CCUG 45161 / LMG 19568 / NCTC 13146 / CH001A)).